The primary structure comprises 67 residues: Large ribosomal subunit protein bL32c (67 aa).

The protein belongs to the bacterial ribosomal protein bL32 family.

It is found in the plastid. Its subcellular location is the chloroplast. This Chara vulgaris (Common stonewort) protein is Large ribosomal subunit protein bL32c.